Consider the following 668-residue polypeptide: Protein ENTREP3 (668 aa).

Transmembrane regions (helical) follow at residues 34–54 (LLTL…FSMV), 67–87 (SCPS…IVSW), and 91–111 (FTLV…LSMA). An N-linked (GlcNAc...) asparagine glycan is attached at asparagine 160. The chain crosses the membrane as a helical span at residues 174–194 (LFSVCGLTICAAIICTLSAIV). 2 positions are modified to phosphoserine: serine 358 and serine 389. Disordered stretches follow at residues 386-419 (FEES…PTAA), 442-503 (RVPR…SSDT), and 550-570 (SAEK…SGPA). Residues 398–407 (AARSYSCSAP) show a composition bias toward low complexity. A Phosphoserine modification is found at serine 493. Serine 574 bears the Phosphoserine mark. 2 disordered regions span residues 597-620 (KAPD…WGRP) and 645-668 (GRRL…ETGL). Over residues 655–668 (HSLSLNGGSRETGL) the composition is skewed to polar residues.

Belongs to the ENTREP family. May interact with WWOX. As to expression, widely expressed.

Its subcellular location is the membrane. This Homo sapiens (Human) protein is Protein ENTREP3.